The sequence spans 160 residues: UPF0225 protein PputW619_1140 (160 aa).

The protein belongs to the UPF0225 family.

The protein is UPF0225 protein PputW619_1140 of Pseudomonas putida (strain W619).